A 488-amino-acid polypeptide reads, in one-letter code: Glutamyl-tRNA(Gln) amidotransferase subunit A (488 aa).

Residues Lys-77 and Ser-152 each act as charge relay system in the active site. Ser-176 acts as the Acyl-ester intermediate in catalysis.

The protein belongs to the amidase family. GatA subfamily. Heterotrimer of A, B and C subunits.

The enzyme catalyses L-glutamyl-tRNA(Gln) + L-glutamine + ATP + H2O = L-glutaminyl-tRNA(Gln) + L-glutamate + ADP + phosphate + H(+). Its function is as follows. Allows the formation of correctly charged Gln-tRNA(Gln) through the transamidation of misacylated Glu-tRNA(Gln) in organisms which lack glutaminyl-tRNA synthetase. The reaction takes place in the presence of glutamine and ATP through an activated gamma-phospho-Glu-tRNA(Gln). This is Glutamyl-tRNA(Gln) amidotransferase subunit A from Streptococcus pyogenes serotype M28 (strain MGAS6180).